We begin with the raw amino-acid sequence, 352 residues long: Photosystem II D2 protein (352 aa).

Residues 1–31 lie on the Cytoplasmic side of the membrane; that stretch reads MTIAIGRAPAERGWFDILDDWLKRDRFVFVG. A helical transmembrane segment spans residues 32-53; that stretch reads WSGILLFPCAYLALGGWLTGTT. At 54 to 108 the chain is on the lumenal side; sequence FVTSWYTHGLASSYLEGCNFLTVAVSTPANSMGHSLLLLWGPEAQGDFTRWCQLG. A helical transmembrane segment spans residues 109 to 131; sequence GLWTFIALHGAFGLIGFMLRQFE. A chlorophyll a-binding site is contributed by H117. Q129 is a binding site for pheophytin a. Residues 132–140 are Cytoplasmic-facing; the sequence is IARLVGVRP. Residues 141–160 traverse the membrane as a helical segment; the sequence is YNAIAFSAPIAVFVSVFLIY. N142 lines the pheophytin a pocket. The Lumenal segment spans residues 161-193; sequence PLGQSSWFFAPSFGVAAIFRFLLFFQGFHNWTL. A helical membrane pass occupies residues 194–217; that stretch reads NPFHMMGVAGVLGGALLCAIHGAT. H197 provides a ligand contact to chlorophyll a. Positions 214 and 261 each coordinate a plastoquinone. H214 serves as a coordination point for Fe cation. The Cytoplasmic segment spans residues 218–265; it reads VENTLFQDGEGASTFRAFNPTQAEETYSMVTANRFWSQIFGIAFSNKR. Residues 266 to 288 form a helical membrane-spanning segment; sequence WLHFFMLFVPVTGLWMSAIGVVG. Residue H268 participates in Fe cation binding. Topologically, residues 289 to 352 are lumenal; that stretch reads LALNLRSYDF…EEVLPRGNAL (64 aa).

Belongs to the reaction center PufL/M/PsbA/D family. As to quaternary structure, PSII is composed of 1 copy each of membrane proteins PsbA, PsbB, PsbC, PsbD, PsbE, PsbF, PsbH, PsbI, PsbJ, PsbK, PsbL, PsbM, PsbT, PsbX, PsbY, PsbZ, Psb30/Ycf12, peripheral proteins PsbO, CyanoQ (PsbQ), PsbU, PsbV and a large number of cofactors. It forms dimeric complexes. Part of a photosystem II (PSII) assembly intermediate complex PSII-I; crystallized from a strain deleted of psbJ, it forms monomeric PSII before addition of the oxygen evolving complex. PSII-I includes 3 assembly factors not found in mature PSII (Psb27, Psb28 and Psb34). The cofactor is The D1/D2 heterodimer binds P680, chlorophylls that are the primary electron donor of PSII, and subsequent electron acceptors. It shares a non-heme iron and each subunit binds pheophytin, quinone, additional chlorophylls, carotenoids and lipids. There is also a Cl(-1) ion associated with D1 and D2, which is required for oxygen evolution. PSII binds additional chlorophylls, carotenoids and specific lipids..

The protein resides in the cellular thylakoid membrane. It catalyses the reaction 2 a plastoquinone + 4 hnu + 2 H2O = 2 a plastoquinol + O2. In terms of biological role, photosystem II (PSII) is a light-driven water:plastoquinone oxidoreductase that uses light energy to abstract electrons from H(2)O, generating O(2) and a proton gradient subsequently used for ATP formation. It consists of a core antenna complex that captures photons, and an electron transfer chain that converts photonic excitation into a charge separation. The D1/D2 (PsbA/PsbD) reaction center heterodimer binds P680, the primary electron donor of PSII as well as several subsequent electron acceptors. D2 is needed for assembly of a stable PSII complex. This is Photosystem II D2 protein from Thermosynechococcus vestitus (strain NIES-2133 / IAM M-273 / BP-1).